The sequence spans 159 residues: Phosphopantetheine adenylyltransferase (159 aa).

The protein belongs to the eukaryotic CoaD family.

The protein resides in the cytoplasm. The enzyme catalyses (R)-4'-phosphopantetheine + ATP + H(+) = 3'-dephospho-CoA + diphosphate. It participates in cofactor biosynthesis; coenzyme A biosynthesis. Reversibly transfers an adenylyl group from ATP to 4'-phosphopantetheine, yielding dephospho-CoA (dPCoA) and pyrophosphate. The polypeptide is Phosphopantetheine adenylyltransferase (Thermococcus gammatolerans (strain DSM 15229 / JCM 11827 / EJ3)).